A 223-amino-acid chain; its full sequence is Ribose-5-phosphate isomerase A (223 aa).

Substrate is bound by residues 32-35 (TGST), 85-88 (DGAD), and 98-101 (KGGG). Glu-107 acts as the Proton acceptor in catalysis. Residue Lys-125 participates in substrate binding.

The protein belongs to the ribose 5-phosphate isomerase family. Homodimer.

It carries out the reaction aldehydo-D-ribose 5-phosphate = D-ribulose 5-phosphate. The protein operates within carbohydrate degradation; pentose phosphate pathway; D-ribose 5-phosphate from D-ribulose 5-phosphate (non-oxidative stage): step 1/1. Its function is as follows. Catalyzes the reversible conversion of ribose-5-phosphate to ribulose 5-phosphate. The sequence is that of Ribose-5-phosphate isomerase A from Pseudomonas syringae pv. tomato (strain ATCC BAA-871 / DC3000).